The chain runs to 1031 residues: Probable ATP-dependent RNA helicase DDX46 (1031 aa).

Residues 1–24 are compositionally biased toward basic residues; sequence MGRESRHYRKRSASRGRSGSRSRS. The segment at 1 to 228 is disordered; it reads MGRESRHYRK…EMEGEELDPL (228 aa). Residue glycine 2 is the site of N-myristoyl glycine attachment. Basic and acidic residues predominate over residues 26-49; it reads SPSDKRSKRGDDRRSRSRDRDRRR. 2 stretches are compositionally biased toward basic residues: residues 50-73 and 81-103; these read ERSR…RSRS and ERRR…RRSR. The span at 112-200 shows a compositional bias: basic and acidic residues; the sequence is KKTENRSRSK…EMKQGKKWSL (89 aa). Residues 152 to 197 are a coiled coil; sequence DQNKLEEEMRKRKERVEKWREEQRKKAMENIGELKKEIEEMKQGKK. Lysine 186 is covalently cross-linked (Glycyl lysine isopeptide (Lys-Gly) (interchain with G-Cter in SUMO2)). Serine 199 is modified (phosphoserine). Composition is skewed to acidic residues over residues 201 to 211 and 219 to 228; these read EDDDDDEDDPA and EMEGEELDPL. N6-acetyllysine is present on lysine 263. Tyrosine 294 carries the post-translational modification Phosphotyrosine. A phosphoserine mark is found at serine 295 and serine 296. Lysine 325 participates in a covalent cross-link: Glycyl lysine isopeptide (Lys-Gly) (interchain with G-Cter in SUMO2). The residue at position 346 (serine 346) is a Phosphoserine. Residues 372–400 carry the Q motif motif; that stretch reads KSWVQCGISMKILNSLKKHGYEKPTPIQT. One can recognise a Helicase ATP-binding domain in the interval 403 to 581; that stretch reads IPAIMSGRDL…RRILSKPIEV (179 aa). 416–423 lines the ATP pocket; it reads AKTGSGKT. The short motif at 529–532 is the DEAD box element; that stretch reads DEAD. The Helicase C-terminal domain maps to 592–753; it reads DVEQQVIVIE…AVPPDLEKLW (162 aa). Lysine 776 is subject to N6-acetyllysine. Lysine 779 participates in a covalent cross-link: Glycyl lysine isopeptide (Lys-Gly) (interchain with G-Cter in SUMO2). Phosphoserine is present on serine 804. Lysine 903 carries the N6-acetyllysine modification. Residues lysine 907 and lysine 915 each participate in a glycyl lysine isopeptide (Lys-Gly) (interchain with G-Cter in SUMO2) cross-link. Serine 928 is modified (phosphoserine).

The protein belongs to the DEAD box helicase family. DDX46/PRP5 subfamily. As to quaternary structure, component of the 17S U2 SnRNP complex, a ribonucleoprotein complex that contains small nuclear RNA (snRNA) U2 and a number of specific proteins. Within the 17S U2 SnRNP complex, DDX46 is part of the SF3B subcomplex, which is required for 'A' complex assembly formed by the stable binding of U2 snRNP to the branchpoint sequence in pre-mRNA. Recruited to the 17S U2 SnRNP complex following release of DDX42; DDX42 and DDX46 bind the SF3B subcomplex in a competitive manner.

The protein localises to the nucleus speckle. It localises to the nucleus. The protein resides in the cajal body. It catalyses the reaction ATP + H2O = ADP + phosphate + H(+). Functionally, component of the 17S U2 SnRNP complex of the spliceosome, a large ribonucleoprotein complex that removes introns from transcribed pre-mRNAs. The 17S U2 SnRNP complex (1) directly participates in early spliceosome assembly and (2) mediates recognition of the intron branch site during pre-mRNA splicing by promoting the selection of the pre-mRNA branch-site adenosine, the nucleophile for the first step of splicing. Within the 17S U2 SnRNP complex, DDX46 plays essential roles during assembly of pre-spliceosome and proofreading of the branch site. This chain is Probable ATP-dependent RNA helicase DDX46, found in Homo sapiens (Human).